Reading from the N-terminus, the 333-residue chain is Anthranilate phosphoribosyltransferase (333 aa).

Residues G81, 84–85, T89, 91–94, 109–117, and A121 contribute to the 5-phospho-alpha-D-ribose 1-diphosphate site; these read GD, NIST, and KHGNRSVSS. G81 contacts anthranilate. Residue S93 participates in Mg(2+) binding. Residue N112 participates in anthranilate binding. R167 is a binding site for anthranilate. Positions 225 and 226 each coordinate Mg(2+).

The protein belongs to the anthranilate phosphoribosyltransferase family. Homodimer. It depends on Mg(2+) as a cofactor.

It carries out the reaction N-(5-phospho-beta-D-ribosyl)anthranilate + diphosphate = 5-phospho-alpha-D-ribose 1-diphosphate + anthranilate. Its pathway is amino-acid biosynthesis; L-tryptophan biosynthesis; L-tryptophan from chorismate: step 2/5. Functionally, catalyzes the transfer of the phosphoribosyl group of 5-phosphorylribose-1-pyrophosphate (PRPP) to anthranilate to yield N-(5'-phosphoribosyl)-anthranilate (PRA). This Haemophilus influenzae (strain PittEE) protein is Anthranilate phosphoribosyltransferase.